The primary structure comprises 1024 residues: Isoleucine--tRNA ligase (1024 aa).

The 'HIGH' region motif lies at 52–62 (PTANGRPHVGH). A 'KMSKS' region motif is present at residues 590-594 (KMSKS). Lysine 593 is a binding site for ATP.

This sequence belongs to the class-I aminoacyl-tRNA synthetase family. IleS type 2 subfamily. As to quaternary structure, monomer. It depends on Zn(2+) as a cofactor.

The protein resides in the cytoplasm. It catalyses the reaction tRNA(Ile) + L-isoleucine + ATP = L-isoleucyl-tRNA(Ile) + AMP + diphosphate. Catalyzes the attachment of isoleucine to tRNA(Ile). As IleRS can inadvertently accommodate and process structurally similar amino acids such as valine, to avoid such errors it has two additional distinct tRNA(Ile)-dependent editing activities. One activity is designated as 'pretransfer' editing and involves the hydrolysis of activated Val-AMP. The other activity is designated 'posttransfer' editing and involves deacylation of mischarged Val-tRNA(Ile). The chain is Isoleucine--tRNA ligase from Picrophilus torridus (strain ATCC 700027 / DSM 9790 / JCM 10055 / NBRC 100828 / KAW 2/3).